Consider the following 69-residue polypeptide: Neuropeptide-like protein 30 (69 aa).

Positions 1–22 are cleaved as a signal peptide; sequence MISTSSILILVVLLACFMAASA. Residues tyrosine 29, tyrosine 39, tyrosine 46, and tyrosine 53 each carry the tyrosine amide modification. Residues tryptophan 58 and tryptophan 67 each carry the tryptophan amide modification.

This sequence belongs to the YARP (YGGW-amide related peptide) family. In terms of tissue distribution, expressed in hypoderm.

It is found in the secreted. Functionally, may have antimicrobial activity. May play a role in response to fungal infection. The sequence is that of Neuropeptide-like protein 30 (nlp-30) from Caenorhabditis elegans.